The following is a 745-amino-acid chain: Cellulose synthase 1 catalytic subunit [UDP-forming] (745 aa).

3 consecutive transmembrane segments (helical) span residues 29–49 (YVVG…TLSL), 106–126 (GILG…LFLS), and 153–173 (IFIP…LGAL). The segment at 147 to 240 (EWPTVDIFIP…HILILDCDHI (94 aa)) is catalytic subdomain A. Asp189 is a catalytic residue. Substrate is bound by residues Asp236 and Asp238. Residues 317–377 (KAIEEIGGFA…GQRMRWARGM (61 aa)) form a catalytic subdomain B region. Residue Asp333 is part of the active site. A run of 6 helical transmembrane segments spans residues 407-427 (FFFA…LFFS), 430-450 (IIAA…FHSI), 468-488 (VYET…MLFP), 515-535 (NIIF…ALIF), 547-567 (ALNC…ISVG), and 649-669 (AVFT…RFVF). The PilZ domain maps to 572–670 (QLRQSHRIEA…EAAVVRFVFG (99 aa)). Residues 708 to 717 (IAHSRPKKKP) show a composition bias toward basic residues. The tract at residues 708-745 (IAHSRPKKKPIALPVERREPTTSQGGQKQEGKISRAAS) is disordered. A compositionally biased stretch (basic and acidic residues) spans 736–745 (QEGKISRAAS).

Belongs to the glycosyltransferase 2 family. Mg(2+) serves as cofactor.

The protein resides in the cell inner membrane. The enzyme catalyses [(1-&gt;4)-beta-D-glucosyl](n) + UDP-alpha-D-glucose = [(1-&gt;4)-beta-D-glucosyl](n+1) + UDP + H(+). It functions in the pathway glycan metabolism; bacterial cellulose biosynthesis. Its activity is regulated as follows. Activated by bis-(3'-5') cyclic diguanylic acid (c-di-GMP). Functionally, catalytic subunit of cellulose synthase. It polymerizes uridine 5'-diphosphate glucose to cellulose. The thick cellulosic mats generated by this enzyme probably provide a specialized protective environment to the bacterium. The chain is Cellulose synthase 1 catalytic subunit [UDP-forming] (bcsAI) from Komagataeibacter xylinus (Gluconacetobacter xylinus).